Consider the following 664-residue polypeptide: Ent-copalyl diphosphate synthase 5 (664 aa).

Residue Lys101 coordinates substrate. Residues Asp233 and Asp235 each contribute to the Mg(2+) site. Positions 233-236 (DIDD) match the DXDD motif motif. A substrate-binding site is contributed by Lys320.

The protein belongs to the terpene synthase family. Tpsc subfamily. It depends on Mg(2+) as a cofactor. As to expression, ubiquitous expression in roots, stems, leaves and flowers.

The protein resides in the plastid. The protein localises to the chloroplast. The enzyme catalyses (2E,6E,10E)-geranylgeranyl diphosphate = ent-copalyl diphosphate. Its pathway is secondary metabolite biosynthesis; terpenoid biosynthesis. Involved in the biosynthesis of ent-kaurene diterpenoids natural products such as oridonin, miltiradiene, eriocalyxin B and nezukol, known to exhibit antitumor, anti-inflammatory and antibacterial activities. Catalyzes the conversion of (2E,6E,10E)-geranylgeranyl diphosphate (GGPP) to ent-copalyl diphosphate (ent-CPP). The sequence is that of Ent-copalyl diphosphate synthase 5 from Isodon rubescens (Rabdosia rubescens).